A 140-amino-acid chain; its full sequence is Resuscitation-promoting factor RpfC (140 aa).

The N-terminal stretch at 1–31 (MTRIAKPLIKSAMAAGLVTASMSLSTAVAHA) is a signal peptide.

This sequence belongs to the transglycosylase family. Rpf subfamily.

It is found in the secreted. Functionally, factor that stimulates resuscitation of dormant cells. Has peptidoglycan (PG) hydrolytic activity. The protein is Resuscitation-promoting factor RpfC (rpfC) of Mycobacterium tuberculosis (strain ATCC 35801 / TMC 107 / Erdman).